Consider the following 561-residue polypeptide: Arginine--tRNA ligase (561 aa).

The 'HIGH' region signature appears at 129 to 139 (ANPTGPLHVGH).

Belongs to the class-I aminoacyl-tRNA synthetase family. In terms of assembly, monomer.

Its subcellular location is the cytoplasm. The catalysed reaction is tRNA(Arg) + L-arginine + ATP = L-arginyl-tRNA(Arg) + AMP + diphosphate. This chain is Arginine--tRNA ligase, found in Bordetella bronchiseptica (strain ATCC BAA-588 / NCTC 13252 / RB50) (Alcaligenes bronchisepticus).